A 341-amino-acid polypeptide reads, in one-letter code: D-erythrose-4-phosphate dehydrogenase (341 aa).

12-13 serves as a coordination point for NAD(+); that stretch reads RI. Substrate-binding positions include 154–156, R200, 213–214, and R236; these read SCT and TK. C155 functions as the Nucleophile in the catalytic mechanism. NAD(+) is bound at residue N318.

This sequence belongs to the glyceraldehyde-3-phosphate dehydrogenase family. Epd subfamily. As to quaternary structure, homotetramer.

The protein localises to the cytoplasm. It catalyses the reaction D-erythrose 4-phosphate + NAD(+) + H2O = 4-phospho-D-erythronate + NADH + 2 H(+). It functions in the pathway cofactor biosynthesis; pyridoxine 5'-phosphate biosynthesis; pyridoxine 5'-phosphate from D-erythrose 4-phosphate: step 1/5. Functionally, catalyzes the NAD-dependent conversion of D-erythrose 4-phosphate to 4-phosphoerythronate. The sequence is that of D-erythrose-4-phosphate dehydrogenase from Edwardsiella ictaluri (strain 93-146).